The sequence spans 342 residues: Fructose-1,6-bisphosphatase class 1 (342 aa).

The Mg(2+) site is built by Glu-91, Asp-113, Leu-115, and Asp-116. Residues 116–119 (DGSS), Asn-211, and Lys-277 contribute to the substrate site. Glu-283 provides a ligand contact to Mg(2+).

It belongs to the FBPase class 1 family. As to quaternary structure, homotetramer. It depends on Mg(2+) as a cofactor.

The protein localises to the cytoplasm. It carries out the reaction beta-D-fructose 1,6-bisphosphate + H2O = beta-D-fructose 6-phosphate + phosphate. Its pathway is carbohydrate biosynthesis; gluconeogenesis. This is Fructose-1,6-bisphosphatase class 1 from Bordetella petrii (strain ATCC BAA-461 / DSM 12804 / CCUG 43448).